The chain runs to 501 residues: Zinc-binding lipoprotein AdcA (501 aa).

An N-terminal signal peptide occupies residues 1–18; it reads MKKISLLLASLCALFLVA. Residue cysteine 19 is the site of N-palmitoyl cysteine attachment. Cysteine 19 is lipidated: S-diacylglycerol cysteine. Zn(2+) is bound at residue histidine 63. The tract at residues 116-136 is disordered; the sequence is LPGGEEEEGDHDHGEEGHHHE. Positions 120–136 are his-rich loop; sequence EEEEGDHDHGEEGHHHE. Positions 125 to 136 are enriched in basic and acidic residues; sequence DHDHGEEGHHHE. Positions 140, 204, and 279 each coordinate Zn(2+).

It belongs to the bacterial solute-binding protein 9 family.

It is found in the cell membrane. Its function is as follows. Part of the ATP-binding cassette (ABC) transport system AdcABC involved in zinc import. Binds zinc with high affinity and specificity and delivers it to the membrane permease for translocation into the cytoplasm. Required for transformability. This Streptococcus pneumoniae (strain ATCC BAA-255 / R6) protein is Zinc-binding lipoprotein AdcA (adcA).